A 348-amino-acid polypeptide reads, in one-letter code: Sorbitol dehydrogenase (348 aa).

Positions 40, 65, and 66 each coordinate Zn(2+). NAD(+) is bound by residues Ile179, Asp199, Arg204, 269 to 271 (VGI), and 293 to 295 (SFR). Position 295 (Arg295) interacts with substrate.

The protein belongs to the zinc-containing alcohol dehydrogenase family. In terms of assembly, homotetramer. It depends on Zn(2+) as a cofactor.

The enzyme catalyses xylitol + NAD(+) = D-xylulose + NADH + H(+). It carries out the reaction L-iditol + NAD(+) = keto-L-sorbose + NADH + H(+). The catalysed reaction is keto-D-fructose + NADH + H(+) = D-sorbitol + NAD(+). Functionally, polyol dehydrogenase that catalyzes the reversible NAD(+)-dependent oxidation of various sugar alcohols. Is active with xylitol, L-iditol and D-sorbitol (D-glucitol) as substrates, leading to the C2-oxidized products D-xylulose, L-sorbose and D-fructose, respectively. Is a key enzyme in the polyol pathway that interconverts glucose and fructose via sorbitol, which constitutes an important alternate route for glucose metabolism. The polypeptide is Sorbitol dehydrogenase (SDH) (Bombyx mori (Silk moth)).